Consider the following 271-residue polypeptide: Formamidopyrimidine-DNA glycosylase (271 aa).

The active-site Schiff-base intermediate with DNA is the Pro-2. Glu-3 (proton donor) is an active-site residue. Catalysis depends on Lys-58, which acts as the Proton donor; for beta-elimination activity. Residues His-92, Arg-111, and Arg-152 each coordinate DNA. An FPG-type zinc finger spans residues 237-271 (SVYGREGEACKQCGRVLKHATIGQRATVWCGSCQR). Arg-261 functions as the Proton donor; for delta-elimination activity in the catalytic mechanism.

Belongs to the FPG family. Monomer. Requires Zn(2+) as cofactor.

The enzyme catalyses Hydrolysis of DNA containing ring-opened 7-methylguanine residues, releasing 2,6-diamino-4-hydroxy-5-(N-methyl)formamidopyrimidine.. It catalyses the reaction 2'-deoxyribonucleotide-(2'-deoxyribose 5'-phosphate)-2'-deoxyribonucleotide-DNA = a 3'-end 2'-deoxyribonucleotide-(2,3-dehydro-2,3-deoxyribose 5'-phosphate)-DNA + a 5'-end 5'-phospho-2'-deoxyribonucleoside-DNA + H(+). Functionally, involved in base excision repair of DNA damaged by oxidation or by mutagenic agents. Acts as a DNA glycosylase that recognizes and removes damaged bases. Has a preference for oxidized purines, such as 7,8-dihydro-8-oxoguanine (8-oxoG). Has AP (apurinic/apyrimidinic) lyase activity and introduces nicks in the DNA strand. Cleaves the DNA backbone by beta-delta elimination to generate a single-strand break at the site of the removed base with both 3'- and 5'-phosphates. The chain is Formamidopyrimidine-DNA glycosylase from Xanthomonas euvesicatoria pv. vesicatoria (strain 85-10) (Xanthomonas campestris pv. vesicatoria).